The following is a 217-amino-acid chain: ATP-dependent Clp protease proteolytic subunit (217 aa).

Ser-121 serves as the catalytic Nucleophile. Residue His-146 is part of the active site.

The protein belongs to the peptidase S14 family. Fourteen ClpP subunits assemble into 2 heptameric rings which stack back to back to give a disk-like structure with a central cavity, resembling the structure of eukaryotic proteasomes.

It is found in the cytoplasm. The catalysed reaction is Hydrolysis of proteins to small peptides in the presence of ATP and magnesium. alpha-casein is the usual test substrate. In the absence of ATP, only oligopeptides shorter than five residues are hydrolyzed (such as succinyl-Leu-Tyr-|-NHMec, and Leu-Tyr-Leu-|-Tyr-Trp, in which cleavage of the -Tyr-|-Leu- and -Tyr-|-Trp bonds also occurs).. Its function is as follows. Cleaves peptides in various proteins in a process that requires ATP hydrolysis. Has a chymotrypsin-like activity. Plays a major role in the degradation of misfolded proteins. In Burkholderia mallei (strain NCTC 10247), this protein is ATP-dependent Clp protease proteolytic subunit.